The primary structure comprises 355 residues: Class E basic helix-loop-helix protein 22 (355 aa).

Disordered stretches follow at residues Ala34–Gly90 and Gly128–Lys215. Composition is skewed to gly residues over residues Gly81 to Gly90 and Gly185 to Ser207. In terms of domain architecture, bHLH spans Ala216–Gln270.

In terms of assembly, interacts with PRDM8. Brain-specific, with the highest expression in the cerebellum.

It localises to the nucleus. In terms of biological role, inhibits DNA binding of TCF3/E47 homodimers and TCF3 (E47)/NEUROD1 heterodimers and acts as a strong repressor of Neurod1 and Myod-responsive genes, probably by heterodimerization with class a basic helix-loop-helix factors. Despite the presence of an intact basic domain, does not bind to DNA. In the brain, may function as an area-specific transcription factor that regulates the postmitotic acquisition of area identities and elucidate the genetic hierarchy between progenitors and postmitotic neurons driving neocortical arealization. May be required for the survival of a specific population of inhibitory neurons in the superficial laminae of the spinal cord dorsal horn that may regulate pruritis. Seems to play a crucial role in the retinogenesis, in the specification of amacrine and bipolar subtypes. Forms with PRDM8 a transcriptional repressor complex controlling genes involved in neural development and neuronal differentiation. This Mus musculus (Mouse) protein is Class E basic helix-loop-helix protein 22 (Bhlhe22).